The following is a 106-amino-acid chain: Iron-sulfur cluster assembly protein CyaY (106 aa).

It belongs to the frataxin family.

Functionally, involved in iron-sulfur (Fe-S) cluster assembly. May act as a regulator of Fe-S biogenesis. This Salmonella heidelberg (strain SL476) protein is Iron-sulfur cluster assembly protein CyaY.